Here is a 22-residue protein sequence, read N- to C-terminus: leu leader peptide (22 aa).

The tract at residues 1-22 (MLHHMTSRANLLLLRRGGSQRS) is disordered. A compositionally biased stretch (low complexity) spans 11 to 22 (LLLLRRGGSQRS).

In terms of biological role, involved in control of the biosynthesis of leucine. This chain is leu leader peptide (leuL), found in Corynebacterium glutamicum (strain ATCC 13032 / DSM 20300 / JCM 1318 / BCRC 11384 / CCUG 27702 / LMG 3730 / NBRC 12168 / NCIMB 10025 / NRRL B-2784 / 534).